Reading from the N-terminus, the 375-residue chain is Major DNA-binding protein (375 aa).

This sequence belongs to the herpesviridae DNA-binding protein family.

It localises to the host nucleus. Functionally, single-stranded DNA-binding protein required for DNA replication. This Equine herpesvirus 1 (strain HVS25A) (EHV-1) protein is Major DNA-binding protein.